Consider the following 49-residue polypeptide: Large ribosomal subunit protein bL33 (49 aa).

This sequence belongs to the bacterial ribosomal protein bL33 family.

This is Large ribosomal subunit protein bL33 from Syntrophotalea carbinolica (strain DSM 2380 / NBRC 103641 / GraBd1) (Pelobacter carbinolicus).